We begin with the raw amino-acid sequence, 271 residues long: Serine protease SP24D (271 aa).

The signal sequence occupies residues 1–22 (MTLADRVPLALAALAYLALVSG). Residues 23–49 (VRFHLSEQNDVLPGGSQARRPFFQGAR) constitute a propeptide, activation peptide. Residues 50-269 (IVGGSVASEG…FVTWIQTTMR (220 aa)) enclose the Peptidase S1 domain. Cysteines 75 and 91 form a disulfide. Residues His90 and Asp136 each act as charge relay system in the active site. 2 disulfides stabilise this stretch: Cys199–Cys211 and Cys221–Cys246. Ser225 (charge relay system) is an active-site residue.

This sequence belongs to the peptidase S1 family. In terms of tissue distribution, highest level of adult expression is in the thorax.

The sequence is that of Serine protease SP24D (Sp24D) from Anopheles gambiae (African malaria mosquito).